The sequence spans 321 residues: Aspartate carbamoyltransferase catalytic subunit (321 aa).

Arg-57 and Thr-58 together coordinate carbamoyl phosphate. Lys-85 provides a ligand contact to L-aspartate. Carbamoyl phosphate-binding residues include Arg-107, His-142, and Gln-145. L-aspartate-binding residues include Arg-175 and Arg-229. 2 residues coordinate carbamoyl phosphate: Gly-270 and Pro-271.

Belongs to the aspartate/ornithine carbamoyltransferase superfamily. ATCase family. In terms of assembly, heterododecamer (2C3:3R2) of six catalytic PyrB chains organized as two trimers (C3), and six regulatory PyrI chains organized as three dimers (R2).

The catalysed reaction is carbamoyl phosphate + L-aspartate = N-carbamoyl-L-aspartate + phosphate + H(+). It participates in pyrimidine metabolism; UMP biosynthesis via de novo pathway; (S)-dihydroorotate from bicarbonate: step 2/3. Functionally, catalyzes the condensation of carbamoyl phosphate and aspartate to form carbamoyl aspartate and inorganic phosphate, the committed step in the de novo pyrimidine nucleotide biosynthesis pathway. The sequence is that of Aspartate carbamoyltransferase catalytic subunit from Mycobacterium leprae (strain TN).